A 251-amino-acid chain; its full sequence is Imidazole glycerol phosphate synthase subunit HisF (251 aa).

Active-site residues include aspartate 11 and aspartate 130.

It belongs to the HisA/HisF family. In terms of assembly, heterodimer of HisH and HisF.

The protein resides in the cytoplasm. The catalysed reaction is 5-[(5-phospho-1-deoxy-D-ribulos-1-ylimino)methylamino]-1-(5-phospho-beta-D-ribosyl)imidazole-4-carboxamide + L-glutamine = D-erythro-1-(imidazol-4-yl)glycerol 3-phosphate + 5-amino-1-(5-phospho-beta-D-ribosyl)imidazole-4-carboxamide + L-glutamate + H(+). It functions in the pathway amino-acid biosynthesis; L-histidine biosynthesis; L-histidine from 5-phospho-alpha-D-ribose 1-diphosphate: step 5/9. Functionally, IGPS catalyzes the conversion of PRFAR and glutamine to IGP, AICAR and glutamate. The HisF subunit catalyzes the cyclization activity that produces IGP and AICAR from PRFAR using the ammonia provided by the HisH subunit. This chain is Imidazole glycerol phosphate synthase subunit HisF, found in Streptococcus mutans serotype c (strain ATCC 700610 / UA159).